An 84-amino-acid chain; its full sequence is Putative defensin-like protein 139 (84 aa).

Positions 1–28 are cleaved as a signal peptide; sequence MEPSNQIFFYLRRSKLLSGLGEIRMAKG. 4 disulfides stabilise this stretch: Cys37/Cys81, Cys46/Cys65, Cys51/Cys75, and Cys55/Cys77.

It belongs to the DEFL family.

The protein resides in the secreted. The protein is Putative defensin-like protein 139 (LCR7) of Arabidopsis thaliana (Mouse-ear cress).